The sequence spans 1026 residues: Multidrug resistance protein MdtC (1026 aa).

A run of 11 helical transmembrane segments spans residues 15 to 35 (ILIAAAITLCGILGFRLLPVA), 333 to 353 (EVEETLAISVALVIMVVFLFL), 360 to 380 (LIPAVAVPVSLIGTFAAMYLC), 387 to 407 (LSLMALTIATGFVVDDAIVVL), 431 to 451 (VGFTVISMSLSLVAVFLPLLL), 463 to 483 (FAVTLSVAIGISLVVSLTLTP), 528 to 548 (LVGVVFLGTVALNIWLYIAIP), 853 to 873 (LILIVAAIATVYIVLGILYES), 897 to 917 (LFNAPFSLIALIGIMLLIGIV), 953 to 973 (PIMMTTLAALFGALPLVLSGG), and 984 to 1004 (ITIVGGLVMSQLLTLYTTPVV).

The protein belongs to the resistance-nodulation-cell division (RND) (TC 2.A.6) family. MdtC subfamily. As to quaternary structure, part of a tripartite efflux system composed of MdtA, MdtB and MdtC. MdtC forms a heteromultimer with MdtB.

It localises to the cell inner membrane. The chain is Multidrug resistance protein MdtC from Salmonella choleraesuis (strain SC-B67).